A 395-amino-acid chain; its full sequence is LL-diaminopimelate aminotransferase (395 aa).

Residues Tyr14 and Gly41 each contribute to the substrate site. Pyridoxal 5'-phosphate is bound by residues Tyr71, 104-105 (AK), Tyr128, Asn174, Tyr205, and 233-235 (SFS). The substrate site is built by Lys105, Tyr128, and Asn174. Lys236 is subject to N6-(pyridoxal phosphate)lysine. Pyridoxal 5'-phosphate is bound by residues Arg244 and Asn275. 2 residues coordinate substrate: Asn275 and Arg368.

The protein belongs to the class-I pyridoxal-phosphate-dependent aminotransferase family. LL-diaminopimelate aminotransferase subfamily. In terms of assembly, homodimer. Requires pyridoxal 5'-phosphate as cofactor.

It catalyses the reaction (2S,6S)-2,6-diaminopimelate + 2-oxoglutarate = (S)-2,3,4,5-tetrahydrodipicolinate + L-glutamate + H2O + H(+). The protein operates within amino-acid biosynthesis; L-lysine biosynthesis via DAP pathway; LL-2,6-diaminopimelate from (S)-tetrahydrodipicolinate (aminotransferase route): step 1/1. Its function is as follows. Involved in the synthesis of meso-diaminopimelate (m-DAP or DL-DAP), required for both lysine and peptidoglycan biosynthesis. Catalyzes the direct conversion of tetrahydrodipicolinate to LL-diaminopimelate. This chain is LL-diaminopimelate aminotransferase, found in Chlamydia caviae (strain ATCC VR-813 / DSM 19441 / 03DC25 / GPIC) (Chlamydophila caviae).